The primary structure comprises 154 residues: SsrA-binding protein (154 aa).

The segment at 130 to 154 (KLHDKRETERRRQDQRDIQRAIKRA) is disordered. A compositionally biased stretch (basic and acidic residues) spans 133–154 (DKRETERRRQDQRDIQRAIKRA).

Belongs to the SmpB family.

The protein localises to the cytoplasm. Functionally, required for rescue of stalled ribosomes mediated by trans-translation. Binds to transfer-messenger RNA (tmRNA), required for stable association of tmRNA with ribosomes. tmRNA and SmpB together mimic tRNA shape, replacing the anticodon stem-loop with SmpB. tmRNA is encoded by the ssrA gene; the 2 termini fold to resemble tRNA(Ala) and it encodes a 'tag peptide', a short internal open reading frame. During trans-translation Ala-aminoacylated tmRNA acts like a tRNA, entering the A-site of stalled ribosomes, displacing the stalled mRNA. The ribosome then switches to translate the ORF on the tmRNA; the nascent peptide is terminated with the 'tag peptide' encoded by the tmRNA and targeted for degradation. The ribosome is freed to recommence translation, which seems to be the essential function of trans-translation. This is SsrA-binding protein from Synechococcus elongatus (strain ATCC 33912 / PCC 7942 / FACHB-805) (Anacystis nidulans R2).